Here is a 121-residue protein sequence, read N- to C-terminus: ATP synthase epsilon chain (121 aa).

Belongs to the ATPase epsilon chain family. As to quaternary structure, F-type ATPases have 2 components, CF(1) - the catalytic core - and CF(0) - the membrane proton channel. CF(1) has five subunits: alpha(3), beta(3), gamma(1), delta(1), epsilon(1). CF(0) has three main subunits: a, b and c.

It is found in the cell membrane. Functionally, produces ATP from ADP in the presence of a proton gradient across the membrane. This Mycobacterium avium (strain 104) protein is ATP synthase epsilon chain.